Reading from the N-terminus, the 112-residue chain is Large ribosomal subunit protein uL22 (112 aa).

This sequence belongs to the universal ribosomal protein uL22 family. As to quaternary structure, part of the 50S ribosomal subunit.

Functionally, this protein binds specifically to 23S rRNA; its binding is stimulated by other ribosomal proteins, e.g. L4, L17, and L20. It is important during the early stages of 50S assembly. It makes multiple contacts with different domains of the 23S rRNA in the assembled 50S subunit and ribosome. In terms of biological role, the globular domain of the protein is located near the polypeptide exit tunnel on the outside of the subunit, while an extended beta-hairpin is found that lines the wall of the exit tunnel in the center of the 70S ribosome. The chain is Large ribosomal subunit protein uL22 from Anaplasma phagocytophilum (strain HZ).